Reading from the N-terminus, the 560-residue chain is Platelet glycoprotein V (560 aa).

The signal sequence occupies residues 1 to 16 (MLRGTLLCAVLGLLRA). The LRRNT domain occupies 17–50 (QPFPCPPACKCVFRDAAQCSGGDVARISALGLPT). The Extracellular portion of the chain corresponds to 17–523 (QPFPCPPACK…KGQDHSPFWG (507 aa)). N-linked (GlcNAc...) asparagine glycosylation is present at Asn51. 13 LRR repeats span residues 75–96 (VLQRLMISDSHISAVAPGTFSD), 99–120 (KLKTLRLSRNKITHLPGALLDK), 123–144 (LLEQLFLDHNALRGIDQNMFQK), 147–168 (NLQELALNQNQLDFLPASLFTN), 171–193 (NLKLLDLSGNNLTHLPKGLLGAQ), 195–216 (KLERLLLHSNRLVSLDSGLLNS), 219–240 (ALTELQFHRNHIRSIAPGAFDR), 243–264 (NLSSLTLSRNHLAFLPSALFLH), 267–288 (NLTLLTLFENPLAELPGVLFGE), 291–312 (GLQELWLNRTQLRTLPAAAFRN), 340–361 (ELQVLALHSNGLTALPDGLLRG), 364–385 (KLRQVSLRRNRLRALPRALFRN), and 388–409 (SLESVQLDHNQLETLPGDVFGA). Residue Asn181 is glycosylated (N-linked (GlcNAc...) (complex) asparagine). N-linked (GlcNAc...) (complex) asparagine glycosylation is present at Asn243. N-linked (GlcNAc...) asparagine glycosylation is found at Asn267, Asn298, and Asn312. N-linked (GlcNAc...) asparagine glycosylation occurs at Asn385. Positions 421–474 (NSWRCDCGLGPFLGWLRQHLGLVGGEEPPRCAGPGAHAGLPLWALPGGDAECPG) constitute an LRRCT domain. The disordered stretch occupies residues 469–498 (DAECPGPRGPPPRPAADSSSEAPVHPALAP). Asn499 carries N-linked (GlcNAc...) asparagine glycosylation. A helical membrane pass occupies residues 524 to 544 (FYFLLLAVQAMITVIIVFAMI). Residues 545–560 (KIGQLFRKLIRERALG) are Cytoplasmic-facing.

In terms of processing, the N-terminus is blocked. Platelets and megakaryocytes.

Its subcellular location is the membrane. In terms of biological role, the GPIb-V-IX complex functions as the vWF receptor and mediates vWF-dependent platelet adhesion to blood vessels. The adhesion of platelets to injured vascular surfaces in the arterial circulation is a critical initiating event in hemostasis. This is Platelet glycoprotein V (GP5) from Homo sapiens (Human).